A 196-amino-acid polypeptide reads, in one-letter code: Transmembrane protein 126A (196 aa).

Residues 1–34 lie on the Mitochondrial matrix side of the membrane; it reads MESHKPSTNKDDLIFNIIPRKIKQLPESDRNLLE. Residues 35–55 traverse the membrane as a helical segment; the sequence is YGSAYIGLNAAFGGLIANSLF. The Mitochondrial intermembrane segment spans residues 56-57; it reads RR. A helical membrane pass occupies residues 58–78; sequence ILNVTQARVASSLPMAVIPFL. Topologically, residues 79–106 are mitochondrial matrix; sequence TANLSYHSFVSLPLSTGNLNCEICTTTR. Residues 107 to 127 traverse the membrane as a helical segment; that stretch reads GTLVGFVLGGLYPILLAIPVN. The Mitochondrial intermembrane segment spans residues 128-159; that stretch reads GGLAARYESSPLPQRGNIFNYWITISKPVFRK. A helical membrane pass occupies residues 160-176; that stretch reads MLFPTLLQTAFAAYLGS. The Mitochondrial matrix segment spans residues 177 to 196; it reads RQYKLLIKALQLPEPDLEIQ.

It belongs to the TMEM126 family. In terms of assembly, interacts with OXA1L; promoting cotranslational quality control in mitochondria.

The protein resides in the mitochondrion inner membrane. In terms of biological role, protein required for the cotranslational protein quality control in the inner membrane of the mitochondria. Associates with newly synthesized polypeptides and may act as a chaperone that cooperates with OXA1L for the insertion of newly synthesized mitochondrial proteins into the inner membrane. Required for the assembly of the ND4 module of mitochondrial complex I. The polypeptide is Transmembrane protein 126A (Tmem126a) (Rattus norvegicus (Rat)).